The primary structure comprises 167 residues: ATP synthase subunit b (167 aa).

Residues 9–29 traverse the membrane as a helical segment; the sequence is ALPLGNMLFIIIAFLLLMLIL.

This sequence belongs to the ATPase B chain family. F-type ATPases have 2 components, F(1) - the catalytic core - and F(0) - the membrane proton channel. F(1) has five subunits: alpha(3), beta(3), gamma(1), delta(1), epsilon(1). F(0) has three main subunits: a(1), b(2) and c(10-14). The alpha and beta chains form an alternating ring which encloses part of the gamma chain. F(1) is attached to F(0) by a central stalk formed by the gamma and epsilon chains, while a peripheral stalk is formed by the delta and b chains.

The protein resides in the cell membrane. In terms of biological role, f(1)F(0) ATP synthase produces ATP from ADP in the presence of a proton or sodium gradient. F-type ATPases consist of two structural domains, F(1) containing the extramembraneous catalytic core and F(0) containing the membrane proton channel, linked together by a central stalk and a peripheral stalk. During catalysis, ATP synthesis in the catalytic domain of F(1) is coupled via a rotary mechanism of the central stalk subunits to proton translocation. Its function is as follows. Component of the F(0) channel, it forms part of the peripheral stalk, linking F(1) to F(0). The sequence is that of ATP synthase subunit b from Leuconostoc mesenteroides subsp. mesenteroides (strain ATCC 8293 / DSM 20343 / BCRC 11652 / CCM 1803 / JCM 6124 / NCDO 523 / NBRC 100496 / NCIMB 8023 / NCTC 12954 / NRRL B-1118 / 37Y).